We begin with the raw amino-acid sequence, 158 residues long: C-type lectin (158 aa).

The N-terminal stretch at 1-23 (MWQFTVVSLGWLAVFLSLSGAKG) is a signal peptide. Intrachain disulfides connect Cys-26/Cys-37, Cys-54/Cys-154, and Cys-129/Cys-146. The C-type lectin domain occupies 33-155 (RNGVCNKLFP…CASLHPFICQ (123 aa)). A Mannose-binding motif is present at residues 119–121 (EPN). Residues Glu-127, Asn-142, and Asp-143 each contribute to the Ca(2+) site.

Belongs to the true venom lectin family. Expressed by the venom gland.

It localises to the secreted. Mannose-binding lectin which recognizes specific carbohydrate structures and agglutinates a variety of animal cells by binding to cell-surface glycoproteins and glycolipids. May be a calcium-dependent lectin. This chain is C-type lectin, found in Cerberus rynchops (Dog-faced water snake).